The following is a 358-amino-acid chain: Isopentenyl-diphosphate delta-isomerase (358 aa).

12-13 (RK) lines the substrate pocket. Residues 69–71 (AMT), Ser99, and Asn128 contribute to the FMN site. Gln158 lines the substrate pocket. Glu159 is a binding site for Mg(2+). FMN contacts are provided by residues Lys190, Thr220, 267–269 (GIR), and 288–289 (AG).

The protein belongs to the IPP isomerase type 2 family. As to quaternary structure, homooctamer. Dimer of tetramers. It depends on FMN as a cofactor. The cofactor is NADPH. Mg(2+) is required as a cofactor.

The protein localises to the cytoplasm. It carries out the reaction isopentenyl diphosphate = dimethylallyl diphosphate. Its function is as follows. Involved in the biosynthesis of isoprenoids. Catalyzes the 1,3-allylic rearrangement of the homoallylic substrate isopentenyl (IPP) to its allylic isomer, dimethylallyl diphosphate (DMAPP). The protein is Isopentenyl-diphosphate delta-isomerase of Listeria monocytogenes serotype 4a (strain HCC23).